The primary structure comprises 151 residues: Large ribosomal subunit protein bL9 (151 aa).

It belongs to the bacterial ribosomal protein bL9 family.

Its function is as follows. Binds to the 23S rRNA. This Francisella tularensis subsp. holarctica (strain LVS) protein is Large ribosomal subunit protein bL9.